The sequence spans 475 residues: Aspartyl/glutamyl-tRNA(Asn/Gln) amidotransferase subunit B (475 aa).

It belongs to the GatB/GatE family. GatB subfamily. In terms of assembly, heterotrimer of A, B and C subunits.

It carries out the reaction L-glutamyl-tRNA(Gln) + L-glutamine + ATP + H2O = L-glutaminyl-tRNA(Gln) + L-glutamate + ADP + phosphate + H(+). The enzyme catalyses L-aspartyl-tRNA(Asn) + L-glutamine + ATP + H2O = L-asparaginyl-tRNA(Asn) + L-glutamate + ADP + phosphate + 2 H(+). Allows the formation of correctly charged Asn-tRNA(Asn) or Gln-tRNA(Gln) through the transamidation of misacylated Asp-tRNA(Asn) or Glu-tRNA(Gln) in organisms which lack either or both of asparaginyl-tRNA or glutaminyl-tRNA synthetases. The reaction takes place in the presence of glutamine and ATP through an activated phospho-Asp-tRNA(Asn) or phospho-Glu-tRNA(Gln). The sequence is that of Aspartyl/glutamyl-tRNA(Asn/Gln) amidotransferase subunit B from Staphylococcus aureus (strain MRSA252).